A 322-amino-acid chain; its full sequence is Large ribosomal subunit protein uL29m (322 aa).

The segment at 1-44 (MLNVQRGLHTTVRLSARTKYTKPKPKPQARVIKSEPSQVTHHDN) is disordered.

This sequence belongs to the universal ribosomal protein uL29 family. In terms of assembly, component of the mitochondrial large ribosomal subunit. Mature mitochondrial ribosomes consist of a small (37S) and a large (54S) subunit. The 37S subunit contains at least 33 different proteins and 1 molecule of RNA (15S). The 54S subunit contains at least 45 different proteins and 1 molecule of RNA (21S).

Its subcellular location is the mitochondrion. The chain is Large ribosomal subunit protein uL29m (MRPL4) from Vanderwaltozyma polyspora (strain ATCC 22028 / DSM 70294 / BCRC 21397 / CBS 2163 / NBRC 10782 / NRRL Y-8283 / UCD 57-17) (Kluyveromyces polysporus).